Consider the following 69-residue polypeptide: uncharacterized protein (69 aa).

Positions 1–18 are cleaved as a signal peptide; sequence MAMLWISMFIIMRKYGRS. The tract at residues 17-69 is disordered; that stretch reads RSSSSSSSSSSSSSSSSSSSSSSSSSSSSSSSSSSSSSSSSGSSSNSNRVVVV. The segment covering 18 to 61 has biased composition (low complexity); that stretch reads SSSSSSSSSSSSSSSSSSSSSSSSSSSSSSSSSSSSSSSSGSSS.

The protein resides in the secreted. This is an uncharacterized protein from Dictyostelium discoideum (Social amoeba).